We begin with the raw amino-acid sequence, 187 residues long: Protein TIFY 3B (187 aa).

Basic and acidic residues predominate over residues 1 to 10 (MTKVKDEPRA). Residues 1–50 (MTKVKDEPRASVEGGCGVADGDGGAAEIGGTGSVEKSINEVRSTEIQTAE) are disordered. Residues 14-32 (GGCGVADGDGGAAEIGGTG) show a composition bias toward gly residues. The Tify domain maps to 51–86 (PTVPPNQLTIFFGGSVTVFDGLPSEKVQEILRIAAK). Positions 139–163 (PIARRHSLQRFLEKRRDRLVNKNPY) match the Jas motif. The short motif at 141-148 (ARRHSLQR) is the Nuclear localization signal element. The disordered stretch occupies residues 152 to 187 (KRRDRLVNKNPYPTSDFKKTDVPTGNVSIKEEFPTA).

This sequence belongs to the TIFY/JAZ family. In terms of assembly, interacts with MYC2, AFPH2/NINJA, TIFY10A/JAZ1, TIFY10B/JAZ2, TIFY11A/JAZ5, TIFY11B/JAZ6, TIFY5A/JAZ8 and TIFY9/JAZ10. (Microbial infection) Interacts with the pathogenic Pseudomonas syringae HopZ1a protein. Post-translationally, (Microbial infection) Acetylated by Pseudomonas syringae HopZ1a. Ubiquitinated. Targeted for degradation by the SCF(COI1) E3 ubiquitin ligase-proteasome pathway during jasmonate signaling.

The protein resides in the nucleus. Its function is as follows. Repressor of jasmonate responses. In Arabidopsis thaliana (Mouse-ear cress), this protein is Protein TIFY 3B.